A 640-amino-acid chain; its full sequence is Probable potassium transport system protein Kup 3 (640 aa).

Positions 1–15 (MTVDAAATPAEAPAT) are enriched in low complexity. The interval 1-20 (MTVDAAATPAEAPATNGHGD) is disordered. A run of 12 helical transmembrane segments spans residues 30 to 50 (LTLG…LYAL), 71 to 91 (VISL…VVIL), 117 to 137 (ASII…DAVI), 155 to 175 (AAFD…LFAV), 183 to 203 (VAAF…IAAF), 224 to 244 (FMLH…LAVT), 265 to 285 (WLFV…ALII), 294 to 314 (PFFL…ATVA), 363 to 383 (LLLA…ALAS), 385 to 405 (YGIS…VVIW), 410 to 430 (WSPL…LTFL), and 437 to 457 (VLEG…LMYT).

Belongs to the HAK/KUP transporter (TC 2.A.72) family.

Its subcellular location is the cell inner membrane. It catalyses the reaction K(+)(in) + H(+)(in) = K(+)(out) + H(+)(out). Transport of potassium into the cell. Likely operates as a K(+):H(+) symporter. The protein is Probable potassium transport system protein Kup 3 of Bradyrhizobium sp. (strain BTAi1 / ATCC BAA-1182).